Here is a 103-residue protein sequence, read N- to C-terminus: Flagellar hook-basal body complex protein FliE (103 aa).

It belongs to the FliE family.

The protein localises to the bacterial flagellum basal body. This is Flagellar hook-basal body complex protein FliE from Yersinia enterocolitica serotype O:8 / biotype 1B (strain NCTC 13174 / 8081).